Reading from the N-terminus, the 246-residue chain is Pyridoxine 5'-phosphate synthase (246 aa).

Asn12 lines the 3-amino-2-oxopropyl phosphate pocket. Residue 14–15 participates in 1-deoxy-D-xylulose 5-phosphate binding; the sequence is DH. Arg23 contacts 3-amino-2-oxopropyl phosphate. His48 serves as the catalytic Proton acceptor. Arg50 and His55 together coordinate 1-deoxy-D-xylulose 5-phosphate. Glu75 acts as the Proton acceptor in catalysis. Thr105 is a binding site for 1-deoxy-D-xylulose 5-phosphate. His196 functions as the Proton donor in the catalytic mechanism. 3-amino-2-oxopropyl phosphate-binding positions include Gly197 and 218–219; that span reads GH.

The protein belongs to the PNP synthase family. As to quaternary structure, homooctamer; tetramer of dimers.

Its subcellular location is the cytoplasm. The catalysed reaction is 3-amino-2-oxopropyl phosphate + 1-deoxy-D-xylulose 5-phosphate = pyridoxine 5'-phosphate + phosphate + 2 H2O + H(+). The protein operates within cofactor biosynthesis; pyridoxine 5'-phosphate biosynthesis; pyridoxine 5'-phosphate from D-erythrose 4-phosphate: step 5/5. Functionally, catalyzes the complicated ring closure reaction between the two acyclic compounds 1-deoxy-D-xylulose-5-phosphate (DXP) and 3-amino-2-oxopropyl phosphate (1-amino-acetone-3-phosphate or AAP) to form pyridoxine 5'-phosphate (PNP) and inorganic phosphate. The sequence is that of Pyridoxine 5'-phosphate synthase from Pseudomonas syringae pv. syringae (strain B728a).